The primary structure comprises 504 residues: Glycerol kinase (504 aa).

Thr12 serves as a coordination point for ADP. ATP-binding residues include Thr12, Thr13, and Ser14. Thr12 contributes to the sn-glycerol 3-phosphate binding site. Residue Arg16 participates in ADP binding. Sn-glycerol 3-phosphate is bound by residues Arg82, Glu83, Tyr134, and Asp246. Glycerol-binding residues include Arg82, Glu83, Tyr134, Asp246, and Gln247. Residues Thr268 and Gly312 each coordinate ADP. Residues Thr268, Gly312, Gln316, and Gly413 each contribute to the ATP site. ADP is bound by residues Gly413 and Asn417.

The protein belongs to the FGGY kinase family.

It catalyses the reaction glycerol + ATP = sn-glycerol 3-phosphate + ADP + H(+). It participates in polyol metabolism; glycerol degradation via glycerol kinase pathway; sn-glycerol 3-phosphate from glycerol: step 1/1. With respect to regulation, inhibited by fructose 1,6-bisphosphate (FBP). In terms of biological role, key enzyme in the regulation of glycerol uptake and metabolism. Catalyzes the phosphorylation of glycerol to yield sn-glycerol 3-phosphate. The chain is Glycerol kinase from Paenarthrobacter aurescens (strain TC1).